A 252-amino-acid chain; its full sequence is MMIYRLNALTDNYIFLLHDPQTGTAAVVDPAEPEPVLAKLAELGATLRAIFNTHHHWDHVGANCALRSRFPDIAVYGSSEDQGRIPEQTVFLKAGDRVPFGQTYFDVLFVPGHTRGHIAYYAPTTGDLFCGDTLFGGGCGRLFEGSPAQMLDSLNQLRQLPEETRVWCAHEYTQKNLSFALTVEADNPTLQERYAQVCRDRAQGKATIPSTIGLEKATNPFLRCEVRSIQIAVGATTPLQTFTRLRGKRDQY.

Zn(2+) is bound by residues histidine 54, histidine 56, aspartate 58, histidine 59, histidine 113, aspartate 132, and histidine 170.

It belongs to the metallo-beta-lactamase superfamily. Glyoxalase II family. Monomer. Zn(2+) serves as cofactor.

It carries out the reaction an S-(2-hydroxyacyl)glutathione + H2O = a 2-hydroxy carboxylate + glutathione + H(+). It functions in the pathway secondary metabolite metabolism; methylglyoxal degradation; (R)-lactate from methylglyoxal: step 2/2. Its function is as follows. Thiolesterase that catalyzes the hydrolysis of S-D-lactoyl-glutathione to form glutathione and D-lactic acid. This is Hydroxyacylglutathione hydrolase from Thermosynechococcus vestitus (strain NIES-2133 / IAM M-273 / BP-1).